A 342-amino-acid polypeptide reads, in one-letter code: Methylthioribose-1-phosphate isomerase (342 aa).

Substrate-binding positions include 44–46 (RGA), Arg-87, and Gln-194. The active-site Proton donor is the Asp-235. 245-246 (NK) provides a ligand contact to substrate.

The protein belongs to the eIF-2B alpha/beta/delta subunits family. MtnA subfamily.

It catalyses the reaction 5-(methylsulfanyl)-alpha-D-ribose 1-phosphate = 5-(methylsulfanyl)-D-ribulose 1-phosphate. It functions in the pathway amino-acid biosynthesis; L-methionine biosynthesis via salvage pathway; L-methionine from S-methyl-5-thio-alpha-D-ribose 1-phosphate: step 1/6. Functionally, catalyzes the interconversion of methylthioribose-1-phosphate (MTR-1-P) into methylthioribulose-1-phosphate (MTRu-1-P). The chain is Methylthioribose-1-phosphate isomerase from Acetivibrio thermocellus (strain ATCC 27405 / DSM 1237 / JCM 9322 / NBRC 103400 / NCIMB 10682 / NRRL B-4536 / VPI 7372) (Clostridium thermocellum).